Here is a 920-residue protein sequence, read N- to C-terminus: MAGKARVHELAKELGVTSKELLATLKEQGEFVKSASSTVEAPVARRLREKFGSKSAPAPAKSAGNGATAAPATSATPATAAAAAAPAPAPAPQAPAKPAAPKPAAPQPVAPPQPAAAAPTPPPAASAPAPAPAPSAPAPSRPGPTPGPRPGPAPKPAPRTPRVGNNPFSTQQPVDRPIPRPQPRPGAPRPGTPRPGMSPNNMPPRPAGPRPGAPAGRPGGPRPGPGGRGPGGGGGRPGGPGGGGGGNYRGGGAGGGGGAGGAAAGGFRGRPGGGGRPGQRGGAAGAFGRPGGAPKRGRKSKRAKRAEYENMQAPVVGGVRLPHGNGETIRLARGASLSDFAEKINANPASLVQALFNLGEMVTATQSVNDETLELLGSEMNYVVQVVSPEDEDRELLESFDLSYGEDAGDEGDLEIRPPVVTVMGHVDHGKTRLLDTIRQANVREGEAGGITQHIGAYQVLTELDGNERLITFIDTPGHEAFTAMRARGAKATDIAILVVAADDGVMPQTVEAINHAQAADVPVVVAVNKIDKEGADPQKIRGQLTEYGLIPEEYGGDTMFVDISAKQGTNIDALLEAVLLTADASLDLRANPDMEAQGVAIEAHLDRGRGPVATVLIQRGTLRVGDSIVAGDAYGRVRRMVDEHGEDVEAAMPSRPVQVIGFTSVPGAGDNLLVVDEDRIARQIADRRSARKRNALAARSRKRISLEDLDSALKETSQLNLILKGDNAGTVEALEEALLGIQVDDEVELRVIDRGVGGVTETNVNLASASDAIIIGFNVRAEGKATELANREGVEIRYYSVIYQAIDEIESALKGMLKPVYEEKELGRAEIRAIFRSSKVGNIAGCLVQSGIMRRNAKARLLRDNVVVAENLTVSSLRREKEDVTEVRDGYECGLTLTYSDIKEGDVIETYELVEKART.

The segment at 33-305 is disordered; that stretch reads KSASSTVEAP…RGRKSKRAKR (273 aa). Over residues 53–86 the composition is skewed to low complexity; that stretch reads SKSAPAPAKSAGNGATAAPATSATPATAAAAAAP. Composition is skewed to pro residues over residues 87–159, 179–193, and 201–212; these read APAP…PAPR, PRPQ…PGTP, and NMPPRPAGPRPG. The segment covering 225-291 has biased composition (gly residues); it reads PGGRGPGGGG…GAAGAFGRPG (67 aa). Residues 295–304 are compositionally biased toward basic residues; the sequence is KRGRKSKRAK. Positions 416 to 588 constitute a tr-type G domain; sequence IRPPVVTVMG…VLLTADASLD (173 aa). Residues 425–432 form a G1 region; the sequence is GHVDHGKT. 425-432 provides a ligand contact to GTP; the sequence is GHVDHGKT. Residues 450-454 form a G2 region; sequence GITQH. A G3 region spans residues 475 to 478; the sequence is DTPG. Residues 475–479 and 529–532 contribute to the GTP site; these read DTPGH and NKID. Residues 529–532 form a G4 region; that stretch reads NKID. The interval 565–567 is G5; the sequence is SAK.

It belongs to the TRAFAC class translation factor GTPase superfamily. Classic translation factor GTPase family. IF-2 subfamily.

The protein resides in the cytoplasm. Functionally, one of the essential components for the initiation of protein synthesis. Protects formylmethionyl-tRNA from spontaneous hydrolysis and promotes its binding to the 30S ribosomal subunits. Also involved in the hydrolysis of GTP during the formation of the 70S ribosomal complex. The chain is Translation initiation factor IF-2 from Mycobacterium sp. (strain JLS).